Reading from the N-terminus, the 545-residue chain is Protein disulfide isomerase-like 1-3 (545 aa).

Residues 1 to 16 show a composition bias toward pro residues; that stretch reads MWPRAPATPPPPPWPS. Residues 1–24 are disordered; the sequence is MWPRAPATPPPPPWPSKPSAASRS. The 135-residue stretch at 55-189 folds into the Thioredoxin 1 domain; it reads ASSTAFAAAF…IVAYLKRQAG (135 aa). N-linked (GlcNAc...) asparagine glycosylation occurs at N87. Active-site nucleophile residues include C107 and C110. A disulfide bond links C107 and C110. A glycan (N-linked (GlcNAc...) asparagine) is linked at N349. Residues 403 to 545 enclose the Thioredoxin 2 domain; sequence FTEGTLAPHV…TTTESVKDEL (143 aa). Active-site nucleophile residues include C453 and C456. Cysteines 453 and 456 form a disulfide. The Prevents secretion from ER signature appears at 542 to 545; that stretch reads KDEL.

The protein belongs to the protein disulfide isomerase family.

The protein localises to the endoplasmic reticulum lumen. It catalyses the reaction Catalyzes the rearrangement of -S-S- bonds in proteins.. Its function is as follows. Acts as a protein-folding catalyst that interacts with nascent polypeptides to catalyze the formation, isomerization, and reduction or oxidation of disulfide bonds. May play a role in storage protein biogenesis. The chain is Protein disulfide isomerase-like 1-3 (PDIL1-3) from Oryza sativa subsp. japonica (Rice).